The primary structure comprises 217 residues: Ribonuclease HII (217 aa).

The RNase H type-2 domain maps to 34-217; that stretch reads WPVAGTDEAG…RMSFRPLKRD (184 aa). Residues aspartate 40, glutamate 41, and aspartate 131 each contribute to the a divalent metal cation site.

It belongs to the RNase HII family. Mn(2+) serves as cofactor. Requires Mg(2+) as cofactor.

The protein localises to the cytoplasm. The catalysed reaction is Endonucleolytic cleavage to 5'-phosphomonoester.. In terms of biological role, endonuclease that specifically degrades the RNA of RNA-DNA hybrids. The chain is Ribonuclease HII from Agrobacterium fabrum (strain C58 / ATCC 33970) (Agrobacterium tumefaciens (strain C58)).